Reading from the N-terminus, the 340-residue chain is CMP-sialic acid transporter 1 (340 aa).

At 1–5 (MAATP) the chain is on the cytoplasmic side. A helical membrane pass occupies residues 6-26 (WYFVAVLLTILTSSQGILTTL). Over 27–36 (SQSDGGYKYD) the chain is Lumenal. Residues 37 to 57 (YATVPFLAEVFKLIISGLFLW) form a helical membrane-spanning segment. Over 58–78 (REMRTSSSTTSRITTDWKSVR) the chain is Cytoplasmic. Residues 79–99 (LFVIPSLIYLIHNNVQFATLT) traverse the membrane as a helical segment. Residues 100 to 102 (YVD) are Lumenal-facing. The helical transmembrane segment at 103-125 (TSTYQIMGNLKIVTTGILFRLFL) threads the bilayer. Over 126-168 (KRKLSKLQWMAIGLLAVGTTTSQVKGCGEASCDSLFTAPIQGY) the chain is Cytoplasmic. A helical membrane pass occupies residues 169–189 (LLGILSAGLSALAGIYTEFLM). Residues 190–200 (KRNNDTLYWQN) are Lumenal-facing. Residues 201–217 (LQLYTFGSLFNVARLIA) traverse the membrane as a helical segment. Topologically, residues 218-238 (DDFRHGFEKGPWWQRIFDGYS) are cytoplasmic. Residues 239–259 (ITTWLVVLNLGSTGLLVSWLM) form a helical membrane-spanning segment. At 260 to 282 (KYADNIVKVYSTSMAMLLTMVAS) the chain is on the lumenal side. A helical transmembrane segment spans residues 283-303 (IYLFSFKPTLQLFLGIVICIM). Residues 304–340 (SLHMYFAPPHTLVDLPVTNEAHAKTLKQVVVEEKTDS) lie on the Cytoplasmic side of the membrane.

This sequence belongs to the nucleotide-sugar transporter family. CMP-Sialate:CMP antiporter (TC 2.A.7.12) subfamily.

It localises to the golgi apparatus membrane. Essential protein. Sugar transporter involved in the transport of CMP-sialic acid from the cytoplasm into the Golgi. In Arabidopsis thaliana (Mouse-ear cress), this protein is CMP-sialic acid transporter 1.